Reading from the N-terminus, the 287-residue chain is Bifunctional protein FolD (287 aa).

Residues 165 to 167 (GRG), Thr190, and Ile231 each bind NADP(+).

It belongs to the tetrahydrofolate dehydrogenase/cyclohydrolase family. As to quaternary structure, homodimer.

It carries out the reaction (6R)-5,10-methylene-5,6,7,8-tetrahydrofolate + NADP(+) = (6R)-5,10-methenyltetrahydrofolate + NADPH. The catalysed reaction is (6R)-5,10-methenyltetrahydrofolate + H2O = (6R)-10-formyltetrahydrofolate + H(+). It participates in one-carbon metabolism; tetrahydrofolate interconversion. Functionally, catalyzes the oxidation of 5,10-methylenetetrahydrofolate to 5,10-methenyltetrahydrofolate and then the hydrolysis of 5,10-methenyltetrahydrofolate to 10-formyltetrahydrofolate. This is Bifunctional protein FolD from Heliobacterium modesticaldum (strain ATCC 51547 / Ice1).